Consider the following 274-residue polypeptide: Isoprenyl transferase (274 aa).

Aspartate 49 is a catalytic residue. Residue aspartate 49 coordinates Mg(2+). Residues 50–53 (GNRR), phenylalanine 54, arginine 62, histidine 66, and 94–96 (STD) contribute to the substrate site. Asparagine 97 acts as the Proton acceptor in catalysis. Substrate-binding positions include arginine 100, arginine 223, and 229 to 231 (RLS). Glutamate 242 contributes to the Mg(2+) binding site.

This sequence belongs to the UPP synthase family. Homodimer. Mg(2+) serves as cofactor.

Catalyzes the condensation of isopentenyl diphosphate (IPP) with allylic pyrophosphates generating different type of terpenoids. In Deinococcus radiodurans (strain ATCC 13939 / DSM 20539 / JCM 16871 / CCUG 27074 / LMG 4051 / NBRC 15346 / NCIMB 9279 / VKM B-1422 / R1), this protein is Isoprenyl transferase.